Reading from the N-terminus, the 526-residue chain is GMP synthase [glutamine-hydrolyzing] (526 aa).

The 200-residue stretch at 9-208 folds into the Glutamine amidotransferase type-1 domain; that stretch reads RILILDFGSQ…VKDICGCECL (200 aa). The Nucleophile role is filled by C86. Residues H182 and E184 contribute to the active site. The GMPS ATP-PPase domain maps to 209–401; sequence WTPATIIDDA…LGLPYDMLYR (193 aa). Position 236–242 (236–242) interacts with ATP; it reads SGGVDSS.

As to quaternary structure, homodimer.

The catalysed reaction is XMP + L-glutamine + ATP + H2O = GMP + L-glutamate + AMP + diphosphate + 2 H(+). It functions in the pathway purine metabolism; GMP biosynthesis; GMP from XMP (L-Gln route): step 1/1. In terms of biological role, catalyzes the synthesis of GMP from XMP. The chain is GMP synthase [glutamine-hydrolyzing] from Aeromonas salmonicida (strain A449).